The primary structure comprises 522 residues: DNA damage-binding protein CMR1 (522 aa).

The interval 38–100 (AGVLEKSRAP…DNQLLKMGSP (63 aa)) is disordered. The span at 54-63 (TTNTRATKSA) shows a compositional bias: polar residues. Ser64 bears the Phosphoserine mark. Thr69 carries the phosphothreonine modification. Residues 75–84 (LRGESADDVK) are compositionally biased toward basic and acidic residues. WD repeat units follow at residues 183-224 (ITYE…LADS), 239-281 (LFTK…EVLT), 287-327 (DDSL…SEYN), 331-371 (LADK…KKPE), 388-427 (DSRL…HLSA), 442-481 (GRWT…LAHL), and 482-521 (PTAT…IKQE). The residue at position 224 (Ser224) is a Phosphoserine.

This sequence belongs to the WD repeat DDB2/WDR76 family.

Its subcellular location is the cytoplasm. The protein resides in the nucleus. DNA-binding protein that binds to both single- and double-stranded DNA. Binds preferentially to UV-damaged DNA in vitro. May be involved in DNA-metabolic processes. This Saccharomyces cerevisiae (strain ATCC 204508 / S288c) (Baker's yeast) protein is DNA damage-binding protein CMR1.